Reading from the N-terminus, the 243-residue chain is Protein YagJ (243 aa).

In Escherichia coli (strain K12), this protein is Protein YagJ (yagJ).